The primary structure comprises 509 residues: Sperm-associated antigen 6 (509 aa).

ARM repeat units lie at residues 31-70 (PQNI…RLAN), 73-112 (DDLA…AVGK), 115-154 (PQLA…YIAR), 157-196 (AELS…DIAK), 199-238 (PELA…QVSK), 241-280 (VDLA…EIAK), 325-365 (ENLA…QIGR), and 368-409 (PEHA…NILQ).

In terms of assembly, interacts with SPAG16 and SPAG17. Highly expressed in testis.

Its subcellular location is the cytoplasm. The protein resides in the cytoskeleton. It is found in the cell projection. It localises to the cilium. The protein localises to the flagellum. Its subcellular location is the cilium axoneme. Its function is as follows. Important for structural integrity of the central apparatus in the sperm tail and for flagellar motility. This is Sperm-associated antigen 6 (SPAG6) from Homo sapiens (Human).